Here is a 264-residue protein sequence, read N- to C-terminus: Intermembrane phospholipid transport system ATP-binding protein MlaF (264 aa).

The ABC transporter domain maps to 6–242 (IEVKNLTFKR…QDLRVVQFLK (237 aa)). 38-45 (GPSGIGKT) lines the ATP pocket.

The protein belongs to the ABC transporter superfamily. MlaF family. In terms of assembly, the complex is composed of two ATP-binding proteins (MlaF), two transmembrane proteins (MlaE), two cytoplasmic solute-binding proteins (MlaB) and six periplasmic solute-binding proteins (MlaD).

It localises to the cell inner membrane. Its function is as follows. Part of the ABC transporter complex MlaFEDB, which is involved in a phospholipid transport pathway that maintains lipid asymmetry in the outer membrane by retrograde trafficking of phospholipids from the outer membrane to the inner membrane. Responsible for energy coupling to the transport system. The chain is Intermembrane phospholipid transport system ATP-binding protein MlaF from Haemophilus influenzae (strain ATCC 51907 / DSM 11121 / KW20 / Rd).